The chain runs to 158 residues: MSYTITDPSKLAYLSSAWADPNSLINLCTNSLGNQFQTQQARTTVQQQFADVWQPVPTLTSRFPAGAGYFRVYRYDPILDPLITFLMGTFDTRNRIIEVENPQNPTTTETLDATRRVDDATVAIRSAINNLLNELVRGTGMYNQVSFETMSGLTWTSS.

Ser2 is subject to N-acetylserine; by host.

It belongs to the virgaviridae capsid protein family.

It localises to the virion. In terms of biological role, capsid protein self-assembles to form rod-shaped virions about 18 nm in diameter with a central canal enclosing the viral genomic RNA. The polypeptide is Capsid protein (CP) (Odontoglossum ringspot virus (isolate Singapore 1) (ORSV)).